The chain runs to 559 residues: Poly [ADP-ribose] polymerase 2 (559 aa).

Residues 1–58 are disordered; the sequence is MAPRRQRSGSGRRVLNEAKKVDNGNKATEDDSPPGKKMRTCQRKGPMAGGKDADRTKD. An N-terminal region (NTR) region spans residues 1 to 83; the sequence is MAPRRQRSGS…VDPECAAKLG (83 aa). Residues 14-29 show a composition bias toward basic and acidic residues; the sequence is VLNEAKKVDNGNKATE. 2 consecutive short sequence motifs (nuclear localization signal) follow at residues 19–20 and 33–39; these read KK and PPGKKMR. Residues lysine 36 and lysine 37 each carry the N6-(ADP-ribosyl)lysine; alternate modification. N6-acetyllysine; alternate is present on residues lysine 36 and lysine 37. Positions 84–181 constitute a WGR domain; it reads KAHVYCEGDD…ENFEKVPGKY (98 aa). Positions 207–324 constitute a PARP alpha-helical domain; it reads ESQLDLRVQE…DIEIALKLVK (118 aa). Serine 208 is modified (phosphoserine). The 228-residue stretch at 332–559 folds into the PARP catalytic domain; it reads HPLDQHYRNL…KIQFNFLQLW (228 aa). NAD(+) contacts are provided by residues 404–406, glycine 413, arginine 420, and serine 446; that span reads HGS. Glutamate 534 functions as the For poly [ADP-ribose] polymerase activity in the catalytic mechanism.

It belongs to the ARTD/PARP family. As to quaternary structure, component of a base excision repair (BER) complex, containing at least XRCC1, PARP1, POLB and LRIG3. Homo- and heterodimer with PARP1. Interacts (via the PARP catalytic domain) with HPF1. Interacts with core nucleosomes. Auto poly-ADP-ribosylated on serine residues, leading to dissociation of the PARP2-HPF1 complex from chromatin. Poly-ADP-ribosylated by PARP1. Post-translationally, acetylation reduces DNA binding and enzymatic activity. In terms of processing, proteolytically cleaved by caspase-8 (CASP8) in response to apoptosis, leading to its inactivation. In terms of tissue distribution, widely expressed; the highest levels were in testis followed by ovary. Expression is correlated with proliferation, with higher levels occurring during early fetal development and organogenesis and in the highly proliferative cell compartments of adult.

It is found in the nucleus. Its subcellular location is the chromosome. The enzyme catalyses NAD(+) + (ADP-D-ribosyl)n-acceptor = nicotinamide + (ADP-D-ribosyl)n+1-acceptor + H(+).. The catalysed reaction is L-seryl-[protein] + NAD(+) = O-(ADP-D-ribosyl)-L-seryl-[protein] + nicotinamide + H(+). It carries out the reaction L-aspartyl-[protein] + NAD(+) = 4-O-(ADP-D-ribosyl)-L-aspartyl-[protein] + nicotinamide. It catalyses the reaction L-glutamyl-[protein] + NAD(+) = 5-O-(ADP-D-ribosyl)-L-glutamyl-[protein] + nicotinamide. ADP-ribosyltransferase activity is regulated via an allosteric activation mechanism. In absence of activation signal, PARP2 is autoinhibited by the PARP alpha-helical domain (also named HD region), which prevents effective NAD(+)-binding. Activity is highly stimulated by signals, which unfold the PARP alpha-helical domain, relieving autoinhibition. Poly-ADP-ribosyltransferase activity is tightly regulated and PARP2 is removed from damaged chromatin following initial poly-ADP-ribosylation of chromatin to avoid prolonged residence (trapping) that has cytotoxic consequences. CHD1L promotes PARP2 removal from chromatin. Its function is as follows. Poly-ADP-ribosyltransferase that mediates poly-ADP-ribosylation of proteins and plays a key role in DNA repair. Mediates glutamate, aspartate or serine ADP-ribosylation of proteins: the ADP-D-ribosyl group of NAD(+) is transferred to the acceptor carboxyl group of target residues and further ADP-ribosyl groups are transferred to the 2'-position of the terminal adenosine moiety, building up a polymer with an average chain length of 20-30 units. Serine ADP-ribosylation of proteins constitutes the primary form of ADP-ribosylation of proteins in response to DNA damage. Mediates glutamate and aspartate ADP-ribosylation of target proteins in absence of HPF1. Following interaction with HPF1, catalyzes serine ADP-ribosylation of target proteins; HPF1 conferring serine specificity by completing the PARP2 active site. PARP2 initiates the repair of double-strand DNA breaks: recognizes and binds DNA breaks within chromatin and recruits HPF1, licensing serine ADP-ribosylation of target proteins, such as histones, thereby promoting decompaction of chromatin and the recruitment of repair factors leading to the reparation of DNA strand breaks. HPF1 initiates serine ADP-ribosylation but restricts the polymerase activity of PARP2 in order to limit the length of poly-ADP-ribose chains. Specifically mediates formation of branched poly-ADP-ribosylation. Branched poly-ADP-ribose chains are specifically recognized by some factors, such as APLF. In addition to proteins, also able to ADP-ribosylate DNA: preferentially acts on 5'-terminal phosphates at DNA strand breaks termini in nicked duplex. The chain is Poly [ADP-ribose] polymerase 2 (Parp2) from Mus musculus (Mouse).